Consider the following 357-residue polypeptide: S-adenosyl-L-methionine:benzoic acid/salicylic acid carboxyl methyltransferase 3 (357 aa).

Residue Tyr-18 participates in S-adenosyl-L-homocysteine binding. A benzoate-binding site is contributed by Gln-25. Cys-59, Asn-64, Asp-96, Leu-97, Ser-135, and Phe-136 together coordinate S-adenosyl-L-homocysteine. Benzoate is bound at residue Trp-157. Mg(2+) contacts are provided by Asn-168, Asp-254, Phe-256, and Asn-257. Gln-260 contributes to the benzoate binding site.

Belongs to the methyltransferase superfamily. Type-7 methyltransferase family.

It carries out the reaction benzoate + S-adenosyl-L-methionine = methyl benzoate + S-adenosyl-L-homocysteine. It functions in the pathway aromatic compound metabolism. Converts benzoic acid into the volatile ester methyl benzoates. This scent, mostly produced in a rhythmical, diurnal manner, attracts the pollinators. This chain is S-adenosyl-L-methionine:benzoic acid/salicylic acid carboxyl methyltransferase 3, found in Petunia hybrida (Petunia).